A 529-amino-acid chain; its full sequence is Bifunctional purine biosynthesis protein PurH (529 aa).

One can recognise an MGS-like domain in the interval 1–148; sequence MQQRRPVRRA…KNHKDVAIVV (148 aa). Lysine 287 is modified (N6-acetyllysine).

It belongs to the PurH family.

It carries out the reaction (6R)-10-formyltetrahydrofolate + 5-amino-1-(5-phospho-beta-D-ribosyl)imidazole-4-carboxamide = 5-formamido-1-(5-phospho-D-ribosyl)imidazole-4-carboxamide + (6S)-5,6,7,8-tetrahydrofolate. The catalysed reaction is IMP + H2O = 5-formamido-1-(5-phospho-D-ribosyl)imidazole-4-carboxamide. The protein operates within purine metabolism; IMP biosynthesis via de novo pathway; 5-formamido-1-(5-phospho-D-ribosyl)imidazole-4-carboxamide from 5-amino-1-(5-phospho-D-ribosyl)imidazole-4-carboxamide (10-formyl THF route): step 1/1. It functions in the pathway purine metabolism; IMP biosynthesis via de novo pathway; IMP from 5-formamido-1-(5-phospho-D-ribosyl)imidazole-4-carboxamide: step 1/1. This is Bifunctional purine biosynthesis protein PurH from Escherichia fergusonii (strain ATCC 35469 / DSM 13698 / CCUG 18766 / IAM 14443 / JCM 21226 / LMG 7866 / NBRC 102419 / NCTC 12128 / CDC 0568-73).